We begin with the raw amino-acid sequence, 302 residues long: MPRVGLIVNDGKELAVKTAKTFQKKLEDSGFEVVRVSSAGGLLGFTNPDQYMSSQGYNSCIPEGFDSSILFAVVLGGDGTVLSAARQTAPLGIPILTVNTGHLGFLAEAYLSDIDKIFKHLVARQWSIEKRTSLVVSVMRGDQCRWEALCLNEMALHREPMTSMCHFEISVGRHAPVDISADGVILSTPTGSTAYSLSAGGPVITPDCPVLQLTPVSPHSLASRALVFSNEEPVTVFPATPERLMMVVDGSAGCYVWPEDRVLIRKSDHPVKFIRLSDHEFFQVLRNKLGWGLPHVAKPDKT.

The active-site Proton acceptor is the aspartate 78. NAD(+) is bound by residues 78-79, 152-153, aspartate 182, and 193-198; these read DG, NE, and TAYSLS.

The protein belongs to the NAD kinase family. It depends on a divalent metal cation as a cofactor.

It localises to the cytoplasm. It catalyses the reaction NAD(+) + ATP = ADP + NADP(+) + H(+). In terms of biological role, involved in the regulation of the intracellular balance of NAD and NADP, and is a key enzyme in the biosynthesis of NADP. Catalyzes specifically the phosphorylation on 2'-hydroxyl of the adenosine moiety of NAD to yield NADP. This is NAD kinase 2 from Prochlorococcus marinus (strain NATL2A).